We begin with the raw amino-acid sequence, 435 residues long: Nucleosome assembly protein 1 (435 aa).

The segment at 1-51 (MTEQPINTKKKNGDISKAPTPQNTPASVTNSYMRSKPPTVSTIQESNNEDG) is disordered. Ser16 is modified (phosphoserine). A compositionally biased stretch (polar residues) spans 19 to 50 (PTPQNTPASVTNSYMRSKPPTVSTIQESNNED). A phosphothreonine mark is found at Thr20 and Thr24. Ser27 is subject to Phosphoserine. The residue at position 29 (Thr29) is a Phosphothreonine. Residues Ser31 and Ser35 each carry the phosphoserine modification. Position 42 is a phosphothreonine (Thr42). Position 46 is a phosphoserine (Ser46). The residue at position 52 (Thr52) is a Phosphothreonine. Acidic residues-rich tracts occupy residues 146–185 (PTVE…EDEQ) and 338–355 (EAND…DEEL). 2 disordered regions span residues 146–187 (PTVE…EQGI) and 308–435 (ESFF…CKQQ). Over residues 356–374 (EARLELDYQLGEEIKDRLI) the composition is skewed to basic and acidic residues. Residues 386–421 (VDFDYPELEGEGDEDEYSDEDGEGDSDDDDDDDDEA) show a composition bias toward acidic residues.

This sequence belongs to the nucleosome assembly protein (NAP) family. In terms of assembly, component of the GIN4 complex which forms a ring at the bud neck. Post-translationally, phosphorylation is cell cycle dependent and is important for its bud neck localization. Phosphorylation is highest in newly collected G1 cells, declines when the cells are traversing through the G1 phase, and reaches the lowest level around the time of bud emergence. Phosphorylation increases and remains high through the rest of the cell cycle until the beginning of the next one, when it decreases again. Phosphorylation involves two septin ring-associated kinases, CLA4 and GIN4, and its dephosphorylation occurs at the septin ring in a manner dependent on the phosphatases PP2A and CDC14.

The protein localises to the bud neck. The protein resides in the bud tip. Functionally, acidic protein, which assembles histones into an octamer. Involved in the regulation of the localization and the function of the septins during mitosis. The polypeptide is Nucleosome assembly protein 1 (NAP1) (Candida albicans (strain SC5314 / ATCC MYA-2876) (Yeast)).